Here is a 35-residue protein sequence, read N- to C-terminus: Cytochrome b6-f complex subunit 5 (35 aa).

The chain crosses the membrane as a helical span at residues 5 to 25 (LLTGIVLGSIFITLLGLLAAA).

This sequence belongs to the PetG family. As to quaternary structure, the 4 large subunits of the cytochrome b6-f complex are cytochrome b6, subunit IV (17 kDa polypeptide, PetD), cytochrome f and the Rieske protein, while the 4 small subunits are PetG, PetL, PetM and PetN. The complex functions as a dimer.

The protein localises to the plastid. It is found in the chloroplast thylakoid membrane. Component of the cytochrome b6-f complex, which mediates electron transfer between photosystem II (PSII) and photosystem I (PSI), cyclic electron flow around PSI, and state transitions. PetG is required for either the stability or assembly of the cytochrome b6-f complex. The chain is Cytochrome b6-f complex subunit 5 from Cyanidium caldarium (Red alga).